The following is a 379-amino-acid chain: Chaperone protein DnaJ (379 aa).

The 65-residue stretch at 5-69 (EYYERLGVDK…QKRAAYDQYG (65 aa)) folds into the J domain. The CR-type zinc-finger motif lies at 141–223 (GVEKQVKYNR…CHGSGHEKVA (83 aa)). C154, C157, C171, C174, C197, C200, and C214 together coordinate Zn(2+). CXXCXGXG motif repeat units follow at residues 154–161 (CHTCGGSG), 171–178 (CHKCGGRG), 197–204 (CDVCHGTG), and 211–218 (STTCHGSG).

The protein belongs to the DnaJ family. Homodimer. Requires Zn(2+) as cofactor.

Its subcellular location is the cytoplasm. Participates actively in the response to hyperosmotic and heat shock by preventing the aggregation of stress-denatured proteins and by disaggregating proteins, also in an autonomous, DnaK-independent fashion. Unfolded proteins bind initially to DnaJ; upon interaction with the DnaJ-bound protein, DnaK hydrolyzes its bound ATP, resulting in the formation of a stable complex. GrpE releases ADP from DnaK; ATP binding to DnaK triggers the release of the substrate protein, thus completing the reaction cycle. Several rounds of ATP-dependent interactions between DnaJ, DnaK and GrpE are required for fully efficient folding. Also involved, together with DnaK and GrpE, in the DNA replication of plasmids through activation of initiation proteins. The protein is Chaperone protein DnaJ of Lactococcus lactis subsp. cremoris (Streptococcus cremoris).